The chain runs to 85 residues: MMIKGMAEDDCADNGIPLPNVTSKILLLVIEYCKKHVVESKEEDLKKWDAEFMKKMEQSILFDVMMAANYLNIQSLLDLTFSNCR.

The tract at residues 65 to 85 is interaction with the F-box domain of F-box proteins; sequence MMAANYLNIQSLLDLTFSNCR.

It belongs to the SKP1 family. Part of a SCF (SKP1-cullin-F-box) protein ligase complex.

The protein resides in the nucleus. The protein operates within protein modification; protein ubiquitination. Functionally, involved in ubiquitination and subsequent proteasomal degradation of target proteins. Together with CUL1, RBX1 and a F-box protein, it forms a SCF E3 ubiquitin ligase complex. The functional specificity of this complex depends on the type of F-box protein. In the SCF complex, it serves as an adapter that links the F-box protein to CUL1. The polypeptide is SKP1-like protein 6 (ASK6) (Arabidopsis thaliana (Mouse-ear cress)).